The following is a 334-amino-acid chain: N-acetyl-gamma-glutamyl-phosphate reductase (334 aa).

C154 is an active-site residue.

The protein belongs to the NAGSA dehydrogenase family. Type 1 subfamily.

The protein localises to the cytoplasm. It catalyses the reaction N-acetyl-L-glutamate 5-semialdehyde + phosphate + NADP(+) = N-acetyl-L-glutamyl 5-phosphate + NADPH + H(+). Its pathway is amino-acid biosynthesis; L-arginine biosynthesis; N(2)-acetyl-L-ornithine from L-glutamate: step 3/4. In terms of biological role, catalyzes the NADPH-dependent reduction of N-acetyl-5-glutamyl phosphate to yield N-acetyl-L-glutamate 5-semialdehyde. The sequence is that of N-acetyl-gamma-glutamyl-phosphate reductase from Escherichia coli (strain K12).